A 37-amino-acid chain; its full sequence is Pi-theraphotoxin-Hm3a (37 aa).

3 cysteine pairs are disulfide-bonded: Cys-3–Cys-18, Cys-10–Cys-23, and Cys-17–Cys-33.

This sequence belongs to the psalmotoxin-1 family. In terms of tissue distribution, expressed by the venom gland.

It localises to the secreted. In terms of biological role, this toxin acts on different isoforms of acid-sensing ion channel ASIC1 in a similar manner to psalmotoxin-1 (AC P60514). On ASIC1a homotrimer, it provokes a pH-dependent inhibition (IC(50)=39.7 nM on human and IC(50)=1.3 nM on rat channels), whereas it potentiates ASIC1b homotrimer and ASIC1a-ASIC1b heterotrimer (EC(50)=178.1 nM on human ASIC1b, EC(50)=46.5 nM on rat ASIC1b and EC(50)=17.4 nM on rat ASIC1a-ASIC1b channels). On rat ASIC1a, it acts by inhibiting channel currents by shifting the pH of half-maximal effect (pH(50)) of steady-state desensitization and activation to more alkaline values. This Heteroscodra maculata (Togo starburst tarantula) protein is Pi-theraphotoxin-Hm3a.